The primary structure comprises 594 residues: Aspartate--tRNA(Asp/Asn) ligase (594 aa).

An L-aspartate-binding site is contributed by E175. The tract at residues 199–202 is aspartate; the sequence is QQLK. R221 is an L-aspartate binding site. Residues 221-223 and Q230 each bind ATP; that span reads RDE. H450 contacts L-aspartate. Residue E485 coordinates ATP. Residue R492 participates in L-aspartate binding. 537–540 is a binding site for ATP; sequence GIDR.

The protein belongs to the class-II aminoacyl-tRNA synthetase family. Type 1 subfamily. In terms of assembly, homodimer.

It localises to the cytoplasm. The catalysed reaction is tRNA(Asx) + L-aspartate + ATP = L-aspartyl-tRNA(Asx) + AMP + diphosphate. Functionally, aspartyl-tRNA synthetase with relaxed tRNA specificity since it is able to aspartylate not only its cognate tRNA(Asp) but also tRNA(Asn). Reaction proceeds in two steps: L-aspartate is first activated by ATP to form Asp-AMP and then transferred to the acceptor end of tRNA(Asp/Asn). In Herpetosiphon aurantiacus (strain ATCC 23779 / DSM 785 / 114-95), this protein is Aspartate--tRNA(Asp/Asn) ligase.